The following is a 292-amino-acid chain: ATP synthase gamma chain (292 aa).

Belongs to the ATPase gamma chain family. As to quaternary structure, F-type ATPases have 2 components, CF(1) - the catalytic core - and CF(0) - the membrane proton channel. CF(1) has five subunits: alpha(3), beta(3), gamma(1), delta(1), epsilon(1). CF(0) has three main subunits: a, b and c.

Its subcellular location is the cell inner membrane. In terms of biological role, produces ATP from ADP in the presence of a proton gradient across the membrane. The gamma chain is believed to be important in regulating ATPase activity and the flow of protons through the CF(0) complex. This Methylobacterium sp. (strain 4-46) protein is ATP synthase gamma chain.